The primary structure comprises 63 residues: Kappa-theraphotoxin-Gr3a (63 aa).

The first 21 residues, 1–21, serve as a signal peptide directing secretion; sequence MKTSVFVLVLGLVLLFAVSFA. Positions 22-29 are excised as a propeptide; the sequence is TEMEESAR. Intrachain disulfides connect Cys31–Cys45, Cys38–Cys50, and Cys44–Cys57.

Belongs to the neurotoxin 10 (Hwtx-1) family. 63 (VsTx1) subfamily. Expressed by the venom gland.

The protein resides in the secreted. Its function is as follows. Inhibits sodium channels Nav1.7/SCN9A and potassium channels Kv11.1/KCNH2. Also binds the voltage-sensor domain of the potassium channel KvAP (from the archaeon Aeropyrum pernix) with very slow apparent binding kinetics and affects channel gating. Reaches its target by dynamically partitioning into anionic or zwitterionic headgroup lipid membranes. May bind to the open state of KvAP. The polypeptide is Kappa-theraphotoxin-Gr3a (Grammostola rosea (Chilean rose tarantula)).